Here is a 518-residue protein sequence, read N- to C-terminus: Probable carboxypeptidase 2 (518 aa).

An N-terminal signal peptide occupies residues 1-21; sequence MVAYHLLTLISLGLGSHCASA. Residue asparagine 46 is glycosylated (N-linked (GlcNAc...) asparagine). A disordered region spans residues 53–76; it reads PAFTSPGTVPRGFSDGTSGPTRDE. Positions 71–351 constitute a Peptidase M14 domain; that stretch reads GPTRDETMEG…VMAKSILQTA (281 aa). Asparagine 116 carries N-linked (GlcNAc...) asparagine glycosylation. Histidine 136, glutamate 139, and histidine 224 together coordinate Zn(2+). The Proton donor/acceptor role is filled by glutamate 322. Residues asparagine 393 and asparagine 459 are each glycosylated (N-linked (GlcNAc...) asparagine).

This sequence belongs to the peptidase M14 family. Zn(2+) is required as a cofactor.

Its subcellular location is the secreted. In terms of biological role, extracellular metalloprotease that contributes to pathogenicity. The sequence is that of Probable carboxypeptidase 2 (MCPB) from Trichophyton verrucosum (strain HKI 0517).